Here is a 736-residue protein sequence, read N- to C-terminus: 1,4-alpha-glucan branching enzyme GlgB 2 (736 aa).

Residue Asp415 is the Nucleophile of the active site. Glu468 (proton donor) is an active-site residue.

The protein belongs to the glycosyl hydrolase 13 family. GlgB subfamily. Monomer.

It catalyses the reaction Transfers a segment of a (1-&gt;4)-alpha-D-glucan chain to a primary hydroxy group in a similar glucan chain.. The protein operates within glycan biosynthesis; glycogen biosynthesis. In terms of biological role, catalyzes the formation of the alpha-1,6-glucosidic linkages in glycogen by scission of a 1,4-alpha-linked oligosaccharide from growing alpha-1,4-glucan chains and the subsequent attachment of the oligosaccharide to the alpha-1,6 position. This Rhizobium johnstonii (strain DSM 114642 / LMG 32736 / 3841) (Rhizobium leguminosarum bv. viciae) protein is 1,4-alpha-glucan branching enzyme GlgB 2.